The chain runs to 329 residues: Secretory carrier-associated membrane protein 2 (329 aa).

Residues 1–74 are disordered; sequence MSAFDTNPFA…PSVEPAQPTP (74 aa). The Cytoplasmic segment spans residues 1 to 153; that stretch reads MSAFDTNPFA…DYQRICKMLY (153 aa). Polar residues-rich tracts occupy residues 19-31 and 40-51; these read QDPSVTQLTNAPQ and FSETNAATTVPA. A helical membrane pass occupies residues 154-174; that stretch reads YLWMLHSVTLFLNLLACLAWF. The Lumenal portion of the chain corresponds to 175 to 181; sequence TSDAANG. Residues 182–202 traverse the membrane as a helical segment; it reads TAFGLSILWFLIFTPCAFLCW. The Cytoplasmic portion of the chain corresponds to 203 to 218; the sequence is YRPIYKAFRSDNSFSF. Residues 203–218 are interaction with SLC9A7; the sequence is YRPIYKAFRSDNSFSF. The chain crosses the membrane as a helical span at residues 219-239; it reads FVFFFVFFCQIGIYFIQLIGL. Topologically, residues 240–262 are lumenal; sequence PNLGTSGWLAALSTMKNGPLAVT. A helical membrane pass occupies residues 263–283; it reads IIMMVVAGFFTLCAGLSLFLL. Residues 284-329 lie on the Cytoplasmic side of the membrane; the sequence is QRVHAFYRRTGASFQQAQEEFSQGIFSSRTFRGAASSAARGAFQGN. Residues Ser319 and Ser320 each carry the phosphoserine modification.

This sequence belongs to the SCAMP family. In terms of assembly, interacts with SLC6A4 and SLC9A7. Interacts with SLC9A5; this interaction regulates SLC9A5 cell-surface targeting and SLC9A5 activity.

The protein resides in the golgi apparatus. The protein localises to the trans-Golgi network membrane. Its subcellular location is the recycling endosome membrane. Functionally, functions in post-Golgi recycling pathways. Acts as a recycling carrier to the cell surface. The protein is Secretory carrier-associated membrane protein 2 (Scamp2) of Mus musculus (Mouse).